The chain runs to 187 residues: Troponin I, slow skeletal muscle (187 aa).

At P2 the chain carries N-acetylproline. The interval 2–48 (PEVERKSKITASRKLMLKSLMLAKAKECWEQEHEEREAEKVRYLSER) is involved in binding TNC. S58 carries the post-translational modification Phosphoserine. The segment at 97 to 118 (LKLKVLDLRGKFKRPPLRRVRV) is involved in binding TNC and actin.

This sequence belongs to the troponin I family. In terms of assembly, binds to actin and tropomyosin.

Functionally, troponin I is the inhibitory subunit of troponin, the thin filament regulatory complex which confers calcium-sensitivity to striated muscle actomyosin ATPase activity. This Mus musculus (Mouse) protein is Troponin I, slow skeletal muscle (Tnni1).